Reading from the N-terminus, the 460-residue chain is NADH-ubiquinone oxidoreductase chain 4 (460 aa).

Transmembrane regions (helical) follow at residues 20–42, 61–81, 93–113, 114–134, 148–168, 195–215, 225–245, 258–278, 285–304, 309–331, 351–371, and 394–414; these read PKWL…LTWL, PLST…VLAS, QRLY…AFGA, TEII…LIII, TYFL…LLLL, IWWA…GVHL, PVAG…YGMM, LAYP…SICL, SLIA…GILI, GFTG…FCLA, MIFP…LALP, and IILT…LFLM.

The protein belongs to the complex I subunit 4 family.

It localises to the mitochondrion membrane. The catalysed reaction is a ubiquinone + NADH + 5 H(+)(in) = a ubiquinol + NAD(+) + 4 H(+)(out). Its function is as follows. Core subunit of the mitochondrial membrane respiratory chain NADH dehydrogenase (Complex I) that is believed to belong to the minimal assembly required for catalysis. Complex I functions in the transfer of electrons from NADH to the respiratory chain. The immediate electron acceptor for the enzyme is believed to be ubiquinone. The chain is NADH-ubiquinone oxidoreductase chain 4 (MT-ND4) from Formosania lacustris (Oriental stream loach).